A 721-amino-acid chain; its full sequence is MRIQQSALLLLLLAVTSQGDAESNWNDKIKVFTVATEPTDGYTRYIRSARVYDIEVTTLGLGEEWKGGDMQKPGGGFKLNLLREAIAPYKNEPETIILFTDSYDVIITTTLDEIFEKFKESGAKILFSAEKYCWPDKSLANDYPEVEGKASRFLNSGAFIGYAPQVFALLVDPIEDTADDQLYFTKIFLDETKRAKLGLKLDVQSRLFQNLHGAKNDVKLKVDLESNQGVLQNVDFMTTPSIIHGNGLSKVDLNAYGNYLARTFNGVCLLCQENLLDLEETNLPVISLALMVTQPVPFFDQFLEGIESLNYPKEKLHLLIYSNVAFHDDDIKSFVNKHAKEYATAKFALSTDELDERQGRQLALDKARLHQSDYIFFVDADAHIDDGEVLRELLRLNKQFVAPIFSKHKELWSNFWGALSEGGYYARSHDYVDIVKRELIGMFNVPHVTSIYLVKKTAFDAISFKHKEFDPDMAMCESLRNAGIFMYASNLRIFGHLVNADDFNTTVTRPDFYTLFSNEIDWTEKYIHPNYSLQLNESNKIQQPCPDVYWFQIVSDAFCDDLVAIMEAHNGWSDGSNNDNRLEGGYEAVPTRDIHMKQVGLERLYLKFLQMFVRPLQERAFTGYFHNPPRALMNFMVRYRPDEQPSLRPHHDSSTYTINIAMNRAGIDYQGGGCRFIRYNCSVTDTKKGWMLMHPGRLTHYHEGLLVTNGTRYIMISFIDP.

Residues 1–21 form the signal peptide; the sequence is MRIQQSALLLLLLAVTSQGDA. 3 N-linked (GlcNAc...) asparagine glycosylation sites follow: asparagine 504, asparagine 530, and asparagine 536. The Fe2OG dioxygenase domain maps to 627–721; sequence NPPRALMNFM…RYIMISFIDP (95 aa). Positions 650 and 652 each coordinate Fe cation. Asparagine 680 carries N-linked (GlcNAc...) asparagine glycosylation. Histidine 702 is a binding site for Fe cation. An N-linked (GlcNAc...) asparagine glycan is attached at asparagine 709. Arginine 712 is a binding site for 2-oxoglutarate.

It depends on L-ascorbate as a cofactor. Fe(2+) serves as cofactor.

The protein localises to the endoplasmic reticulum. It localises to the secreted. Its subcellular location is the extracellular space. It carries out the reaction L-lysyl-[collagen] + 2-oxoglutarate + O2 = (5R)-5-hydroxy-L-lysyl-[collagen] + succinate + CO2. In terms of biological role, forms hydroxylysine residues in collagen type IV. Required for the secretion of collagen type IV (vkg) from haemocytes, fat body and follicle cells. The sequence is that of Procollagen-lysine,2-oxoglutarate 5-dioxygenase from Drosophila melanogaster (Fruit fly).